Here is a 251-residue protein sequence, read N- to C-terminus: MENFSLLSISGPPISSSALSAFPDIMFSRATSLPDIAKTAVPTEASSPAQALPPQYQSITVRQGIQNTALSPDCSLGDTQHGEKLRRNCTIYRPWFSPYSYFVCADKESHPEAYDFPEVQQDEGKWDNCLSEDMAESICSSSSSAENTCPREATKKSRHGLDSITSQDILMASRWHPAQQNGYKCAACCRMYPTLDFLKSHIKRGFREGFSCKVYYRKLKALWSKEPKAWLGDRLSSGSCQAFNSPAEHLR.

It localises to the nucleus membrane. Plays a role in spermiogenesis and fertilization. This chain is Spermatogenesis-associated protein 46 (SPATA46), found in Macaca fascicularis (Crab-eating macaque).